A 204-amino-acid chain; its full sequence is ATP-dependent Clp protease proteolytic subunit (204 aa).

The Nucleophile role is filled by Ser-101. His-126 is an active-site residue.

The protein belongs to the peptidase S14 family. Component of the chloroplastic Clp protease core complex.

It is found in the plastid. It localises to the chloroplast stroma. The catalysed reaction is Hydrolysis of proteins to small peptides in the presence of ATP and magnesium. alpha-casein is the usual test substrate. In the absence of ATP, only oligopeptides shorter than five residues are hydrolyzed (such as succinyl-Leu-Tyr-|-NHMec, and Leu-Tyr-Leu-|-Tyr-Trp, in which cleavage of the -Tyr-|-Leu- and -Tyr-|-Trp bonds also occurs).. Functionally, cleaves peptides in various proteins in a process that requires ATP hydrolysis. Has a chymotrypsin-like activity. Plays a major role in the degradation of misfolded proteins. The chain is ATP-dependent Clp protease proteolytic subunit from Phalaenopsis aphrodite subsp. formosana (Moth orchid).